The sequence spans 332 residues: UPF0194 membrane protein YbhG (332 aa).

Positions 1–16 are cleaved as a signal peptide; sequence MMKKPVVIGLAVVVLA. A coiled-coil region spans residues 141–210; that stretch reads RTISANDLEN…NLQDSTLIAP (70 aa).

Belongs to the UPF0194 family.

The protein localises to the periplasm. The protein is UPF0194 membrane protein YbhG (ybhG) of Shigella flexneri.